The chain runs to 246 residues: ATP synthase subunit a, chloroplastic (246 aa).

5 helical membrane passes run 35 to 55 (GQVL…GLIA), 94 to 114 (VPFI…GALL), 132 to 152 (DINT…YAGI), 198 to 218 (LVVG…VMLL), and 219 to 239 (GVFT…AYIG).

Belongs to the ATPase A chain family. F-type ATPases have 2 components, CF(1) - the catalytic core - and CF(0) - the membrane proton channel. CF(1) has five subunits: alpha(3), beta(3), gamma(1), delta(1), epsilon(1). CF(0) has four main subunits: a, b, b' and c.

The protein resides in the plastid. It is found in the chloroplast thylakoid membrane. In terms of biological role, key component of the proton channel; it plays a direct role in the translocation of protons across the membrane. This Stigeoclonium helveticum (Green alga) protein is ATP synthase subunit a, chloroplastic.